The sequence spans 719 residues: Probable phosphatidylinositol phosphate kinase DDB_G0267588 (719 aa).

The disordered stretch occupies residues 47–261; sequence VFSPIPPPPS…SDSPNRVRLN (215 aa). 2 stretches are compositionally biased toward low complexity: residues 57–77 and 87–104; these read TTDN…TDNT and IENN…PNSI. The segment covering 107 to 129 has biased composition (basic and acidic residues); that stretch reads ANKKDSIELEEDKEHSIKRKDGS. The segment covering 172–184 has biased composition (polar residues); that stretch reads FDATNDNHNPQEV. The segment covering 199 to 217 has biased composition (low complexity); sequence TTTTTTTTTTTTSTNSTSN. Composition is skewed to polar residues over residues 218 to 228 and 248 to 261; these read KLPNNGDNTVS and ASGS…VRLN. T262 is modified (phosphothreonine). In terms of domain architecture, PIPK spans 316–718; the sequence is NAVGKSMGTE…RFQEFLSTII (403 aa). Positions 579–638 are disordered; the sequence is RENEPPSPSLLRSTLEDSSDFESPSMEQSSAGQQQQQRGSGNYDNSGAGRDSTTGGAAPK. Residues 606 to 619 are compositionally biased toward low complexity; the sequence is QSSAGQQQQQRGSG.

In terms of processing, phosphorylated at Thr-262 by pkgB.

Functionally, may be involved in signaling events that underlie chemotaxis via the chemoattractant-mediated pkgB phosphorylation. The sequence is that of Probable phosphatidylinositol phosphate kinase DDB_G0267588 from Dictyostelium discoideum (Social amoeba).